We begin with the raw amino-acid sequence, 674 residues long: Amino-acid acetyltransferase, mitochondrial (674 aa).

Residues 1 to 50 constitute a mitochondrion transit peptide; that stretch reads MPLVAAMLTRSNGAWKKATSVVQASICRDQQRPNHTTITSVTSVSQRRHF. Over residues 33 to 45 the composition is skewed to polar residues; that stretch reads PNHTTITSVTSVS. The segment at 33–74 is disordered; the sequence is PNHTTITSVTSVSQRRHFSSAENGAKPSRSHPSAAEAKQKRE. Residues 497-665 form the N-acetyltransferase domain; it reads GTPRLKLTDT…YEDVCRGVVP (169 aa).

It belongs to the acetyltransferase family.

Its subcellular location is the mitochondrion. It carries out the reaction L-glutamate + acetyl-CoA = N-acetyl-L-glutamate + CoA + H(+). The protein operates within amino-acid biosynthesis; L-arginine biosynthesis; N(2)-acetyl-L-ornithine from L-glutamate: step 1/4. Functionally, N-acetylglutamate synthase involved in arginine biosynthesis. The polypeptide is Amino-acid acetyltransferase, mitochondrial (ARG2) (Podospora anserina (strain S / ATCC MYA-4624 / DSM 980 / FGSC 10383) (Pleurage anserina)).